A 505-amino-acid polypeptide reads, in one-letter code: Deoxyguanosinetriphosphate triphosphohydrolase (505 aa).

The HD domain maps to 66–273 (RLTHSMEVQQ…MEAADDISYC (208 aa)).

It belongs to the dGTPase family. Type 1 subfamily. As to quaternary structure, homotetramer. Requires Mg(2+) as cofactor.

It catalyses the reaction dGTP + H2O = 2'-deoxyguanosine + triphosphate + H(+). Functionally, dGTPase preferentially hydrolyzes dGTP over the other canonical NTPs. The polypeptide is Deoxyguanosinetriphosphate triphosphohydrolase (Salmonella paratyphi A (strain AKU_12601)).